We begin with the raw amino-acid sequence, 314 residues long: MPVKIPDDLPAAEILESENIFVMSETRAANQDIRPMKVLILNLMPNKIETETQLLRLLGNTPLQVDVDLLRIHDKASKHTSIDHMNNFYRDFEQIRQKNYDGLIITGAPLGKIEFDEVSYWDHIREIIDWSQQHVTSVLFLCWAAHAALYHLFGLNRSLLEIKRAGVFSHKRTSVHYPLLRGFDDEFFAPHSRFAEMDIEKLRAHPELEVLTESDEAGAYMVLSKNNRNLFVMGHPEYQKSTLKDEYNRDIAQGLTPELPKNYFKNDDPDQEPISRWHSHGSLLVSNWLNYYVYQLTPYNLDDMTGITPWESKD.

The active-site Acyl-thioester intermediate is the Cys-142. Substrate contacts are provided by Lys-163 and Ser-192. His-235 (proton acceptor) is an active-site residue. Glu-237 is a catalytic residue. Arg-249 lines the substrate pocket.

The protein belongs to the MetA family.

The protein localises to the cytoplasm. It carries out the reaction L-homoserine + succinyl-CoA = O-succinyl-L-homoserine + CoA. It functions in the pathway amino-acid biosynthesis; L-methionine biosynthesis via de novo pathway; O-succinyl-L-homoserine from L-homoserine: step 1/1. Functionally, transfers a succinyl group from succinyl-CoA to L-homoserine, forming succinyl-L-homoserine. The chain is Homoserine O-succinyltransferase from Shewanella pealeana (strain ATCC 700345 / ANG-SQ1).